The following is a 158-amino-acid chain: Cyclic pyranopterin monophosphate synthase (158 aa).

Substrate contacts are provided by residues 75 to 77 (LCH) and 113 to 114 (ME). D128 is a catalytic residue.

The protein belongs to the MoaC family. Homohexamer; trimer of dimers.

The enzyme catalyses (8S)-3',8-cyclo-7,8-dihydroguanosine 5'-triphosphate = cyclic pyranopterin phosphate + diphosphate. The protein operates within cofactor biosynthesis; molybdopterin biosynthesis. Its function is as follows. Catalyzes the conversion of (8S)-3',8-cyclo-7,8-dihydroguanosine 5'-triphosphate to cyclic pyranopterin monophosphate (cPMP). The sequence is that of Cyclic pyranopterin monophosphate synthase from Actinobacillus succinogenes (strain ATCC 55618 / DSM 22257 / CCUG 43843 / 130Z).